Reading from the N-terminus, the 979-residue chain is Pimaradiene synthase pbcA (979 aa).

The VYDTAW motif signature appears at 34–39 (VYDTAW). A DXDD B-type cyclization motif motif is present at residues 328–331 (DADD). D665, E669, N865, D866, S869, and D873 together coordinate Mg(2+). The DEXXE A-type cyclization motif signature appears at 665–669 (DEFME).

This sequence belongs to the terpene synthase family. Mg(2+) serves as cofactor.

The enzyme catalyses (2E,6E,10E)-geranylgeranyl diphosphate = ent-copalyl diphosphate. It carries out the reaction ent-copalyl diphosphate = ent-pimara-8(14),15-diene + diphosphate. Its pathway is secondary metabolite biosynthesis; terpenoid biosynthesis. Bifunctional terpene synthase; part of the gene cluster that mediates the biosynthesis of the diterpene ent-pimara-8(14),15-diene (PD). Within the cluster, the HMG-CoA reductase AN1593 functions in the mevalonate pathway, which produces isoprenoid precursors. The geranylgeranyl pyrophosphate (GGPP) synthase AN1592 is needed in the formation of GGPP, the precursor for diterpenes. Lastly, the pimaradiene synthase pbcA performs the 2 cyclization steps that convert GGPP to ent-pimara-8(14),15-diene with ent-copalyl diphosphate as an intermediate. The putative roles of the remaining cluster enzymes in ent-pimara-8(14),15-diene biosynthesis is unclear. The cytochrome P450 monooxygenase AN1598, the glutathione S-transferase AN1595, the oxidoreductases AN1596 and AN1597 probably function as decorative enzymes. It is possible that in biological conditions the compound is oxidized to ent-pimara-8(14),15-dien-19-oic acid, which is a bioactive diterpene compound predominant in many plant extracts. The sequence is that of Pimaradiene synthase pbcA from Emericella nidulans (strain FGSC A4 / ATCC 38163 / CBS 112.46 / NRRL 194 / M139) (Aspergillus nidulans).